The chain runs to 277 residues: Probable endonuclease 4 (277 aa).

Zn(2+) contacts are provided by His-69, His-109, Glu-145, Asp-179, His-182, His-214, Asp-227, His-229, and Glu-259.

Belongs to the AP endonuclease 2 family. Zn(2+) serves as cofactor.

The catalysed reaction is Endonucleolytic cleavage to 5'-phosphooligonucleotide end-products.. Its function is as follows. Endonuclease IV plays a role in DNA repair. It cleaves phosphodiester bonds at apurinic or apyrimidinic (AP) sites, generating a 3'-hydroxyl group and a 5'-terminal sugar phosphate. The sequence is that of Probable endonuclease 4 from Bacteroides thetaiotaomicron (strain ATCC 29148 / DSM 2079 / JCM 5827 / CCUG 10774 / NCTC 10582 / VPI-5482 / E50).